The sequence spans 460 residues: Argininosuccinate lyase (460 aa).

This sequence belongs to the lyase 1 family. Argininosuccinate lyase subfamily.

It localises to the cytoplasm. The enzyme catalyses 2-(N(omega)-L-arginino)succinate = fumarate + L-arginine. It functions in the pathway amino-acid biosynthesis; L-arginine biosynthesis; L-arginine from L-ornithine and carbamoyl phosphate: step 3/3. The sequence is that of Argininosuccinate lyase from Oleidesulfovibrio alaskensis (strain ATCC BAA-1058 / DSM 17464 / G20) (Desulfovibrio alaskensis).